The primary structure comprises 429 residues: UDP-N-acetylglucosamine 1-carboxyvinyltransferase (429 aa).

Phosphoenolpyruvate is bound at residue 22–23 (KN). Arg-102 contacts UDP-N-acetyl-alpha-D-glucosamine. The Proton donor role is filled by Cys-126. Cys-126 is modified (2-(S-cysteinyl)pyruvic acid O-phosphothioketal). UDP-N-acetyl-alpha-D-glucosamine is bound by residues 131-135 (RPVDL), Asp-316, and Ile-338.

This sequence belongs to the EPSP synthase family. MurA subfamily.

The protein localises to the cytoplasm. It carries out the reaction phosphoenolpyruvate + UDP-N-acetyl-alpha-D-glucosamine = UDP-N-acetyl-3-O-(1-carboxyvinyl)-alpha-D-glucosamine + phosphate. The protein operates within cell wall biogenesis; peptidoglycan biosynthesis. Functionally, cell wall formation. Adds enolpyruvyl to UDP-N-acetylglucosamine. This chain is UDP-N-acetylglucosamine 1-carboxyvinyltransferase, found in Methylobacterium nodulans (strain LMG 21967 / CNCM I-2342 / ORS 2060).